A 961-amino-acid chain; its full sequence is Leucine--tRNA ligase (961 aa).

The 'HIGH' region motif lies at 41 to 51 (PYLNGNLHAGH). The short motif at 632–636 (KMSKS) is the 'KMSKS' region element. Lys635 is an ATP binding site.

The protein belongs to the class-I aminoacyl-tRNA synthetase family.

Its subcellular location is the cytoplasm. The enzyme catalyses tRNA(Leu) + L-leucine + ATP = L-leucyl-tRNA(Leu) + AMP + diphosphate. The protein is Leucine--tRNA ligase of Methanosarcina acetivorans (strain ATCC 35395 / DSM 2834 / JCM 12185 / C2A).